A 417-amino-acid chain; its full sequence is Inactive GDSL esterase/lipase-like protein 25 (417 aa).

The first 50 residues, 1–50 (MLLIPSFTANSNEPPPSKLSLSDLSMAILKSHFFLLFPLLLLHFHTVSFA), serve as a signal peptide directing secretion. N-linked (GlcNAc...) asparagine glycans are attached at residues asparagine 160, asparagine 308, and asparagine 311. Residue histidine 331 is part of the active site.

The protein belongs to the 'GDSL' lipolytic enzyme family. In terms of assembly, interacts with the PYK10 complex and TGG2, but not with TGG1 or PEN2. Expressed throughout the seedling, rosette leaves, roots, inflorescence and imbibed seed, but not in pollen.

The protein localises to the vacuole. The protein resides in the endoplasmic reticulum. Functionally, involved in organization of the endomembrane system and is required for endoplasmic reticulum morphology and organelle distribution. May act by inhibiting the formation of PYK10 complex by binding to GLL23 and exporting it from the ER. Required for proper subcellular localization of myrosinase TGG2. Has no lipase or esterase activity. This chain is Inactive GDSL esterase/lipase-like protein 25 (MVP1), found in Arabidopsis thaliana (Mouse-ear cress).